Reading from the N-terminus, the 423-residue chain is Acyl-coenzyme A diphosphatase FITM2 (423 aa).

The disordered stretch occupies residues methionine 1–alanine 47. Topologically, residues methionine 1–lysine 75 are cytoplasmic. Residues valine 76 to proline 96 traverse the membrane as a helical segment. The Lumenal segment spans residues lysine 97–lysine 113. A helical transmembrane segment spans residues isoleucine 114–isoleucine 134. Topologically, residues threonine 135 to histidine 146 are cytoplasmic. A helical transmembrane segment spans residues phenylalanine 147–valine 167. Residues glutamate 168–leucine 191 lie on the Lumenal side of the membrane. A helical membrane pass occupies residues tryptophan 192–isoleucine 212. Histidine 200 is an active-site residue. Over glutamate 213–threonine 270 the chain is Cytoplasmic. The chain crosses the membrane as a helical span at residues leucine 271–leucine 291. Over tyrosine 292–lysine 299 the chain is Lumenal. Histidine 294 is a catalytic residue. A helical transmembrane segment spans residues valine 300–threonine 320. Over proline 321–serine 423 the chain is Cytoplasmic. Disordered regions lie at residues phenylalanine 344–glutamine 381 and alanine 400–serine 423. Residues serine 351 to asparagine 367 show a composition bias toward low complexity. Positions glutamine 409–serine 423 are enriched in basic and acidic residues.

It belongs to the FIT family. FIT2 subfamily.

It is found in the endoplasmic reticulum membrane. The enzyme catalyses an acyl-CoA + H2O = an acyl-4'-phosphopantetheine + adenosine 3',5'-bisphosphate + 2 H(+). In terms of biological role, fatty acyl-coenzyme A (CoA) diphosphatase that hydrolyzes fatty acyl-CoA to yield acyl-4'-phosphopantetheine and adenosine 3',5'-bisphosphate. Preferentially hydrolyzes unsaturated long-chain acyl-CoA substrates in the endoplasmic reticulum (ER) lumen. This catalytic activity is required for maintaining ER structure and for lipid droplets (LDs) biogenesis, which are lipid storage organelles involved in maintaining lipid and energy homeostasis. May directly bind to diacylglycerol (DAGs) and triacylglycerol, which is also important for LD biogenesis. May support directional budding of nacent LDs from the ER into the cytosol by reducing DAG levels at sites of LD formation. Plays a role in the regulation of cell morphology and cytoskeletal organization. Required for correct morphology of nociceptive multi-dendritic sensory neurons. Required for normal mechanical amplification in hearing. The chain is Acyl-coenzyme A diphosphatase FITM2 from Drosophila melanogaster (Fruit fly).